Reading from the N-terminus, the 380-residue chain is Erythronate-4-phosphate dehydrogenase (380 aa).

Serine 45 and threonine 66 together coordinate substrate. An intrachain disulfide couples cysteine 65 to cysteine 90. NAD(+) contacts are provided by residues 126 to 127 (QV), aspartate 146, threonine 175, 206 to 208 (ASR), and aspartate 232. Arginine 208 is a catalytic residue. Glutamate 237 is a catalytic residue. Catalysis depends on histidine 254, which acts as the Proton donor. Glycine 257 is a binding site for NAD(+). Tyrosine 258 is a binding site for substrate.

This sequence belongs to the D-isomer specific 2-hydroxyacid dehydrogenase family. PdxB subfamily. Homodimer.

The protein localises to the cytoplasm. It carries out the reaction 4-phospho-D-erythronate + NAD(+) = (R)-3-hydroxy-2-oxo-4-phosphooxybutanoate + NADH + H(+). The protein operates within cofactor biosynthesis; pyridoxine 5'-phosphate biosynthesis; pyridoxine 5'-phosphate from D-erythrose 4-phosphate: step 2/5. Its function is as follows. Catalyzes the oxidation of erythronate-4-phosphate to 3-hydroxy-2-oxo-4-phosphonooxybutanoate. This is Erythronate-4-phosphate dehydrogenase from Pseudomonas aeruginosa (strain ATCC 15692 / DSM 22644 / CIP 104116 / JCM 14847 / LMG 12228 / 1C / PRS 101 / PAO1).